The chain runs to 305 residues: GMP synthase [glutamine-hydrolyzing] subunit B (305 aa).

Residues 2 to 184 form the GMPS ATP-PPase domain; it reads VNTERFIQQA…LGLPREIQHR (183 aa). 29 to 35 lines the ATP pocket; that stretch reads SGGVDSS.

As to quaternary structure, heterodimer composed of a glutamine amidotransferase subunit (A) and a GMP-binding subunit (B).

It carries out the reaction XMP + L-glutamine + ATP + H2O = GMP + L-glutamate + AMP + diphosphate + 2 H(+). Its pathway is purine metabolism; GMP biosynthesis; GMP from XMP (L-Gln route): step 1/1. Catalyzes the synthesis of GMP from XMP. The protein is GMP synthase [glutamine-hydrolyzing] subunit B of Methanosphaerula palustris (strain ATCC BAA-1556 / DSM 19958 / E1-9c).